Here is a 252-residue protein sequence, read N- to C-terminus: MERLLIVNADDFGLSKGQNYGIIEACRNGIVTSTTALVNGQAIDHAVQLSRDEPSLAIGMHFVLTMGKPLTAMPGLTRDGVLGKWIWQLAEEDALPLEEITQELASQYLRFIELFGRKPTHLDSHHHVHMFPQIFPIVVRFAAEEGIALRIDRQPLSNSGDLPANLRSSQGFSSAFYGEEISEALFLQVLDDASHRGDLSLEVMCHPAFIDNTIRQSAYCFPRLTELEVLTSASLKYAIAERGYRLGSYLNV.

Positions 61 and 125 each coordinate Mg(2+).

This sequence belongs to the YdjC deacetylase family. ChbG subfamily. Homodimer. Mg(2+) serves as cofactor.

It localises to the cytoplasm. The enzyme catalyses N,N'-diacetylchitobiose + H2O = N-acetyl-beta-D-glucosaminyl-(1-&gt;4)-D-glucosamine + acetate. The catalysed reaction is diacetylchitobiose-6'-phosphate + H2O = N'-monoacetylchitobiose-6'-phosphate + acetate. It functions in the pathway glycan degradation; chitin degradation. Functionally, involved in the degradation of chitin. ChbG is essential for growth on the acetylated chitooligosaccharides chitobiose and chitotriose but is dispensable for growth on cellobiose and chitosan dimer, the deacetylated form of chitobiose. Deacetylation of chitobiose-6-P and chitotriose-6-P is necessary for both the activation of the chb promoter by the regulatory protein ChbR and the hydrolysis of phosphorylated beta-glucosides by the phospho-beta-glucosidase ChbF. Catalyzes the removal of only one acetyl group from chitobiose-6-P to yield monoacetylchitobiose-6-P, the inducer of ChbR and the substrate of ChbF. The polypeptide is Chitooligosaccharide deacetylase (Escherichia coli O8 (strain IAI1)).